We begin with the raw amino-acid sequence, 1862 residues long: Chitin synthase V (1862 aa).

The segment at 1–26 (MAMSLPQLGGAGGPHTQPSLPSLPAH) is disordered. Positions 1–778 (MAMSLPQLGG…CWMEIAQLGE (778 aa)) constitute a Myosin motor domain. Residue Asn-63 is glycosylated (N-linked (GlcNAc...) asparagine). 104–111 (GESGAGKS) is a binding site for ATP. N-linked (GlcNAc...) asparagine glycosylation is found at Asn-123, Asn-429, Asn-483, Asn-522, and Asn-560. A disordered region spans residues 592-643 (TVSSKPMRAPSVMSRKTHRTGRPSTAYKRQQQEAMEELDQQSQAGESKKNAK). Positions 658–682 (LDNVQKAVTDPGTNSYFVFCLKPND) are actin-binding. The next 2 helical transmembrane spans lie at 884 to 904 (WVAL…RLIG) and 923 to 943 (MLIW…PMLI). The Cytochrome b5 heme-binding domain maps to 947-1009 (QYVYSSNELS…YAGKDISALF (63 aa)). N-linked (GlcNAc...) asparagine glycans are attached at residues Asn-1036, Asn-1063, and Asn-1192. The helical transmembrane segment at 1202 to 1222 (FILAISVMLASILVFKFLAAL) threads the bilayer. N-linked (GlcNAc...) asparagine glycans are attached at residues Asn-1459 and Asn-1565. 3 helical membrane passes run 1590-1610 (FVVF…MYIV), 1623-1643 (VPIT…VIFI), and 1650-1670 (MVGW…GLPL). Asn-1771 carries an N-linked (GlcNAc...) asparagine glycan. Positions 1804–1859 (MPSDDALLAEIRDILKTADLMTVTKKGIKQELERRFNVPLDAKRAYINSATEALLS) constitute a DEK-C domain.

In the N-terminal section; belongs to the TRAFAC class myosin-kinesin ATPase superfamily. Myosin family. It in the C-terminal section; belongs to the chitin synthase family. Class V subfamily.

The protein resides in the cell membrane. It catalyses the reaction [(1-&gt;4)-N-acetyl-beta-D-glucosaminyl](n) + UDP-N-acetyl-alpha-D-glucosamine = [(1-&gt;4)-N-acetyl-beta-D-glucosaminyl](n+1) + UDP + H(+). Functionally, polymerizes chitin, a structural polymer of the cell wall and septum, by transferring the sugar moiety of UDP-GlcNAc to the non-reducing end of the growing chitin polymer. ChsV and chsVb do perform additive, but not redundant, functions in septum formation. Involved in cell wall integrity and resistance to antimicrobial plant defense compounds such as the tomato phytoanticipin alpha-tomatine or H(2)O(2), and plays a crucial role in vascular colonization and pathogenicity. Also plays an important role in nuclear sorting or distribution. The polypeptide is Chitin synthase V (Fusarium oxysporum f. sp. lycopersici (strain 4287 / CBS 123668 / FGSC 9935 / NRRL 34936) (Fusarium vascular wilt of tomato)).